A 922-amino-acid polypeptide reads, in one-letter code: GPI inositol-deacylase (922 aa).

The Cytoplasmic portion of the chain corresponds to 1-11 (MFLHSVNLWNL). Residues 12–32 (AFYVFMVFLATLGLWDVFFGF) form a helical membrane-spanning segment. The Lumenal segment spans residues 33-597 (EENKCSMSYM…GQVVRFHGGA (565 aa)). Serine 174 is an active-site residue. Asparagine 363, asparagine 402, and asparagine 558 each carry an N-linked (GlcNAc...) asparagine glycan. A helical membrane pass occupies residues 598-618 (LPAYVVSSILLAYGGQLYSLL). The Cytoplasmic segment spans residues 619–641 (STGYCLEYSTILDKEAKPYKVDP). Residues 642–662 (FVIMIKFLLGYKWFKELWDAV) traverse the membrane as a helical segment. At 663 to 668 (LLPELD) the chain is on the lumenal side. A helical transmembrane segment spans residues 669 to 689 (AIVLTSQSMCFPLVSLILFLF). Residues 690–694 (GTCTA) are Cytoplasmic-facing. Residues 695–715 (YWSGLLSSTSVQLLSSLWLAL) traverse the membrane as a helical segment. At 716-733 (KRPAELPKDIKVMSPDLP) the chain is on the lumenal side. Residues 734–754 (VLTVVFLIVSWTTCGALAILL) form a helical membrane-spanning segment. Over 755–817 (SYLYYVFKVV…DAEDSLRMHS (63 aa)) the chain is Cytoplasmic. The interval 776 to 798 (NQPVNPKHSRRSEKKSNHHKDSA) is disordered. Positions 782 to 793 (KHSRRSEKKSNH) are enriched in basic residues. The helical transmembrane segment at 818–838 (TVINLLTWVVLLSMPSLIYWL) threads the bilayer. Residues 839–894 (KNLRYYFKLSPDPCKPLAFLLIPAIAILGNTHTVSVKSSKLLKTVSQFPLPLAVGV) are Lumenal-facing. The chain crosses the membrane as a helical span at residues 895 to 915 (IAFGSSHLYRVPCFVIIPLVF). Residues 916-922 (HALCNFM) are Cytoplasmic-facing.

The protein belongs to the GPI inositol-deacylase family.

Its subcellular location is the endoplasmic reticulum membrane. Functionally, GPI inositol-deacylase that catalyzes the remove of the acyl chain linked to the 2-OH position of inositol ring from the GPI-anchored protein (GPI-AP) in the endoplasmic reticulum. Initiates the post-attachment remodeling phase of GPI-AP biogenesis and participates in endoplasmic reticulum (ER)-to-Golgi transport of GPI-anchored protein. The protein is GPI inositol-deacylase of Mus musculus (Mouse).